Consider the following 87-residue polypeptide: Phosphoribosyl-ATP pyrophosphatase (87 aa).

This sequence belongs to the PRA-PH family.

The protein localises to the cytoplasm. The catalysed reaction is 1-(5-phospho-beta-D-ribosyl)-ATP + H2O = 1-(5-phospho-beta-D-ribosyl)-5'-AMP + diphosphate + H(+). It participates in amino-acid biosynthesis; L-histidine biosynthesis; L-histidine from 5-phospho-alpha-D-ribose 1-diphosphate: step 2/9. The chain is Phosphoribosyl-ATP pyrophosphatase from Nocardia farcinica (strain IFM 10152).